We begin with the raw amino-acid sequence, 321 residues long: Collectin-43 (321 aa).

The first 20 residues, 1-20 (MLPLPLSILLLLTQSQSFLG), serve as a signal peptide directing secretion. Residues 43–163 (PADSLRGHDG…GEKGARGETS (121 aa)) form a disordered region. A compositionally biased stretch (basic and acidic residues) spans 47 to 65 (LRGHDGRDGKEGPQGEKGD). One can recognise a Collagen-like domain in the interval 49 to 162 (GHDGRDGKEG…PGEKGARGET (114 aa)). 2 stretches are compositionally biased toward gly residues: residues 100-109 (GPEGGVGAPG) and 124-133 (GTPGPGGAIG). Residues 147–159 (KGDRGDPGEKGAR) are compositionally biased toward basic and acidic residues. The C-type lectin domain maps to 222 to 321 (QLCREAKGQL…REERLVICEF (100 aa)). Cystine bridges form between Cys224–Cys319 and Cys297–Cys311.

The protein belongs to the SFTPD family. As to quaternary structure, oligomeric complex of 4 set of homotrimers. Post-translationally, hydroxylated. As to expression, liver specific.

It is found in the secreted. Its function is as follows. Lectin that binds to various sugars: mannose = ManNAc &gt; fucose &gt; GlcNAc &gt; glucose = maltose &gt; galactose &gt; lactose &gt; GalNAc. Could play a role in immune defense. This chain is Collectin-43 (CL43), found in Bos taurus (Bovine).